The sequence spans 227 residues: 2,3-bisphosphoglycerate-dependent phosphoglycerate mutase (227 aa).

Substrate contacts are provided by residues 7-14, 20-21, Arg59, 86-89, Lys97, 113-114, and 182-183; these read RHGQSEWN, TG, ERHY, RR, and GN. His8 serves as the catalytic Tele-phosphohistidine intermediate. The Proton donor/acceptor role is filled by Glu86.

It belongs to the phosphoglycerate mutase family. BPG-dependent PGAM subfamily. As to quaternary structure, homodimer.

The catalysed reaction is (2R)-2-phosphoglycerate = (2R)-3-phosphoglycerate. Its pathway is carbohydrate degradation; glycolysis; pyruvate from D-glyceraldehyde 3-phosphate: step 3/5. In terms of biological role, catalyzes the interconversion of 2-phosphoglycerate and 3-phosphoglycerate. The polypeptide is 2,3-bisphosphoglycerate-dependent phosphoglycerate mutase (Neisseria meningitidis serogroup A / serotype 4A (strain DSM 15465 / Z2491)).